We begin with the raw amino-acid sequence, 326 residues long: N-acetyl-gamma-glutamyl-phosphate reductase (326 aa).

The active site involves Cys155.

The protein belongs to the NAGSA dehydrogenase family. Type 1 subfamily.

The protein localises to the cytoplasm. It catalyses the reaction N-acetyl-L-glutamate 5-semialdehyde + phosphate + NADP(+) = N-acetyl-L-glutamyl 5-phosphate + NADPH + H(+). The protein operates within amino-acid biosynthesis; L-arginine biosynthesis; N(2)-acetyl-L-ornithine from L-glutamate: step 3/4. Catalyzes the NADPH-dependent reduction of N-acetyl-5-glutamyl phosphate to yield N-acetyl-L-glutamate 5-semialdehyde. The sequence is that of N-acetyl-gamma-glutamyl-phosphate reductase from Shewanella baltica (strain OS195).